The following is a 410-amino-acid chain: Thyroid hormone receptor alpha (410 aa).

Residues 1 to 32 (MEQKPSKVECGSDPEESSTRSPDGKRKRKNGQ) are disordered. Positions 1 to 52 (MEQKPSKVECGSDPEESSTRSPDGKRKRKNGQCSLKTSMSGYIPSYLDKDEQ) are modulating. Cys53, Cys56, Cys70, Cys73, Cys91, Cys97, Cys107, and Cys110 together coordinate Zn(2+). 2 NR C4-type zinc fingers span residues 53–73 (CVVC…CEGC) and 91–115 (CKYD…FKKC). Positions 53 to 127 (CVVCGDKATG…VGMAMDLVLD (75 aa)) form a DNA-binding region, nuclear receptor. The region spanning 163 to 407 (EEWDLIHVAT…PPLFLEVFED (245 aa)) is the NR LBD domain. Residues Arg228 and Ser277 each coordinate 3,3',5-triiodo-L-thyronine.

The protein belongs to the nuclear hormone receptor family. NR1 subfamily. Binds DNA as a dimer; homodimer and heterodimer with RXRB. Interacts with NCOA3 and NCOA6 coactivators, leading to a strong increase of transcription of target genes. Probably interacts with SFPQ. Interacts with C1D. Interacts with AKAP13. Interacts with TP53INP2. Interacts with PER2. Interacts with TACC1. The interaction with isoform alpha-1, but not alpha-2, is decreased in the presence of thyroid hormone T3.

The protein resides in the nucleus. Its subcellular location is the cytoplasm. Nuclear hormone receptor that can act as a repressor or activator of transcription. High affinity receptor for thyroid hormones, including triiodothyronine and thyroxine. The protein is Thyroid hormone receptor alpha (THRA) of Ovis aries (Sheep).